We begin with the raw amino-acid sequence, 591 residues long: MRLFARLEVLAILACAVPIAAIPSFLSNSYPAHPAEGVSLFPQTQPQAPLGLWTRLRNTVIERLWRVPPQLNKNRPGKQGKFPLFSAPVSLRARYGDDVVLRFTIRNAEEVKALAEASNILFLDVWASTDEWVDIRLTKDVVPSLLGLLPQSLQTSHIPLIHDLPQTIYESYPSSSQRSSYDVQGFSPSTKHSSDITNIFFQDYQPFSVIVTWMRFLTSMFSSHVQIINIGSTFEGRDIPALQIGVWPANNPKPRKTVVVSGGSHAREWISVSTVNYVAYSLITSYAKSKHVAELLQQFDFIFIPTLNPDGYIYTWEVDRIWRKNRQETSLPFCPGVDLDRTWGFEWDGNITADNPCSESYPGEDPFAGVEAKQFSQWAKNQTAQNNIEFVAFIDLHSYSQQIRYPYSYSCLPNPPNLENLEELAIGIAKAIRLTNRETYEVSSACEGFMASQAKAKSDDPFPRIERTGGSALDWFYHDLNVKYSYQIKLRDRGSYGFLLPRENIVPTGQEMFNAVMVLGRFLSGHDGFGHLDWEDESQRPKADEDDIPSENELGENDDSWIPFDYRNHDDQNEGEGYDNDEWGFRRRRKG.

The first 21 residues, 1–21, serve as a signal peptide directing secretion; it reads MRLFARLEVLAILACAVPIAA. The propeptide occupies 22 to 175; the sequence is IPSFLSNSYP…QTIYESYPSS (154 aa). Residues 203–523 enclose the Peptidase M14 domain; sequence DYQPFSVIVT…NAVMVLGRFL (321 aa). Zn(2+) is bound by residues His-265 and Glu-268. Substrate contacts are provided by residues 265–268, Arg-323, and 340–341; these read HARE and DR. Cys-334 and Cys-357 are oxidised to a cystine. N-linked (GlcNAc...) asparagine glycosylation is found at Asn-350 and Asn-381. His-397 is a binding site for Zn(2+). 398–399 is a binding site for substrate; the sequence is SY. Positions 533–543 are enriched in basic and acidic residues; that stretch reads DWEDESQRPKA. The interval 533-591 is disordered; sequence DWEDESQRPKADEDDIPSENELGENDDSWIPFDYRNHDDQNEGEGYDNDEWGFRRRRKG. Composition is skewed to acidic residues over residues 544-559 and 573-582; these read DEDDIPSENELGENDD and NEGEGYDNDE.

Belongs to the peptidase M14 family. The cofactor is Zn(2+).

It localises to the vacuole. It is found in the secreted. In terms of biological role, inactive carboxypeptidase that may play a role in cell wall organization and biogenesis. This Paracoccidioides lutzii (strain ATCC MYA-826 / Pb01) (Paracoccidioides brasiliensis) protein is Inactive metallocarboxypeptidase ECM14 (ECM14).